Consider the following 388-residue polypeptide: LL-diaminopimelate aminotransferase (388 aa).

Substrate contacts are provided by Tyr13, Gly38, Lys102, Tyr126, and Asn176. Residues 101–102, Tyr126, Asn176, Tyr207, and 235–237 each bind pyridoxal 5'-phosphate; these read SK and SLS. Residue Lys238 is modified to N6-(pyridoxal phosphate)lysine. Arg246 contributes to the pyridoxal 5'-phosphate binding site. A substrate-binding site is contributed by Arg364.

It belongs to the class-I pyridoxal-phosphate-dependent aminotransferase family. LL-diaminopimelate aminotransferase subfamily. Homodimer. Pyridoxal 5'-phosphate serves as cofactor.

It catalyses the reaction (2S,6S)-2,6-diaminopimelate + 2-oxoglutarate = (S)-2,3,4,5-tetrahydrodipicolinate + L-glutamate + H2O + H(+). The protein operates within amino-acid biosynthesis; L-lysine biosynthesis via DAP pathway; LL-2,6-diaminopimelate from (S)-tetrahydrodipicolinate (aminotransferase route): step 1/1. Involved in the synthesis of meso-diaminopimelate (m-DAP or DL-DAP), required for both lysine and peptidoglycan biosynthesis. Catalyzes the direct conversion of tetrahydrodipicolinate to LL-diaminopimelate. The chain is LL-diaminopimelate aminotransferase from Dehalococcoides mccartyi (strain ATCC BAA-2100 / JCM 16839 / KCTC 5957 / BAV1).